Here is a 435-residue protein sequence, read N- to C-terminus: GTPase Der (435 aa).

EngA-type G domains follow at residues 3-168 and 176-351; these read PLVA…PDET and IKLA…QNRQ. GTP contacts are provided by residues 9–16, 56–60, 120–123, 182–189, 229–233, and 294–297; these read GRPNVGKS, DTGGY, NKVE, DTAGL, and NKWD. Residues 352-435 form the KH-like domain; that stretch reads KKISTSELNR…VPVSFRYRKK (84 aa).

The protein belongs to the TRAFAC class TrmE-Era-EngA-EngB-Septin-like GTPase superfamily. EngA (Der) GTPase family. In terms of assembly, associates with the 50S ribosomal subunit.

GTPase that plays an essential role in the late steps of ribosome biogenesis. The sequence is that of GTPase Der from Chlorobium phaeobacteroides (strain BS1).